Here is a 199-residue protein sequence, read N- to C-terminus: Large ribosomal subunit protein mL51 (199 aa).

A mitochondrion-targeting transit peptide spans 1–15 (MNSNSLSRFTSIVRT).

It belongs to the mitochondrion-specific ribosomal protein mL51 family. In terms of assembly, component of the mitochondrial ribosome large subunit (39S) which comprises a 16S rRNA and about 50 distinct proteins.

It localises to the mitochondrion. The protein is Large ribosomal subunit protein mL51 (mrpl-51) of Caenorhabditis elegans.